The following is a 462-amino-acid chain: Glycine--tRNA ligase (462 aa).

Residues R100 and E174 each contribute to the substrate site. ATP-binding positions include 206–208, 216–221, 290–291, and 334–337; these read RNE, FRTREF, EL, and GADR. Residue 221–225 participates in substrate binding; that stretch reads FEQME. Residue 330-334 participates in substrate binding; that stretch reads EPSLG.

It belongs to the class-II aminoacyl-tRNA synthetase family. In terms of assembly, homodimer.

The protein localises to the cytoplasm. The enzyme catalyses tRNA(Gly) + glycine + ATP = glycyl-tRNA(Gly) + AMP + diphosphate. Functionally, catalyzes the attachment of glycine to tRNA(Gly). The sequence is that of Glycine--tRNA ligase from Acetivibrio thermocellus (strain ATCC 27405 / DSM 1237 / JCM 9322 / NBRC 103400 / NCIMB 10682 / NRRL B-4536 / VPI 7372) (Clostridium thermocellum).